A 146-amino-acid chain; its full sequence is Wheatwin-1 (146 aa).

Positions 1–21 (MAARPMLVVALLCAAAAAATA) are cleaved as a signal peptide. The residue at position 22 (Q22) is a Pyrrolidone carboxylic acid. The Barwin domain occupies 22–146 (QQATNVRATY…VNYQFVDCRD (125 aa)). 3 cysteine pairs are disulfide-bonded: C52-C84, C73-C107, and C87-C144.

Monomer.

Its activity is regulated as follows. Inhibited by 5'-ADP. Functionally, shows antifungal activity towards B.cinerea and towards the wheat-specific pathogenic fungi F.culmorum and F.graminearum (groups 1 and 2). Has ribonuclease activity. The polypeptide is Wheatwin-1 (PR4A) (Triticum aestivum (Wheat)).